We begin with the raw amino-acid sequence, 374 residues long: Chaperone protein DnaJ (374 aa).

Positions 5–70 constitute a J domain; the sequence is DYYEVLGVSK…QKRAAYDQYG (66 aa). The CR-type zinc-finger motif lies at 132–210; that stretch reads GTTVKIRVPT…CHGHGRVEET (79 aa). The Zn(2+) site is built by Cys145, Cys148, Cys162, Cys165, Cys184, Cys187, Cys198, and Cys201. CXXCXGXG motif repeat units follow at residues 145–152, 162–169, 184–191, and 198–205; these read CKPCGGSG, CTTCGGHG, CPNCRGQG, and CKECHGHG.

Belongs to the DnaJ family. As to quaternary structure, homodimer. It depends on Zn(2+) as a cofactor.

The protein localises to the cytoplasm. In terms of biological role, participates actively in the response to hyperosmotic and heat shock by preventing the aggregation of stress-denatured proteins and by disaggregating proteins, also in an autonomous, DnaK-independent fashion. Unfolded proteins bind initially to DnaJ; upon interaction with the DnaJ-bound protein, DnaK hydrolyzes its bound ATP, resulting in the formation of a stable complex. GrpE releases ADP from DnaK; ATP binding to DnaK triggers the release of the substrate protein, thus completing the reaction cycle. Several rounds of ATP-dependent interactions between DnaJ, DnaK and GrpE are required for fully efficient folding. Also involved, together with DnaK and GrpE, in the DNA replication of plasmids through activation of initiation proteins. The protein is Chaperone protein DnaJ of Saccharophagus degradans (strain 2-40 / ATCC 43961 / DSM 17024).